The chain runs to 87 residues: Cuticle protein 1 (87 aa).

Pyrrolidone carboxylic acid is present on Gln1. Tandem repeats lie at residues 5–20, 43–58, and 71–86. 3 cysteine pairs are disulfide-bonded: Cys14/Cys20, Cys52/Cys58, and Cys80/Cys86.

The sequence is that of Cuticle protein 1 from Blaberus craniifer (Death's head cockroach).